Reading from the N-terminus, the 711-residue chain is DNA ligase (711 aa).

Residues 39–43 (DAEYD), 88–89 (SL), and glutamate 119 each bind NAD(+). Residue lysine 121 is the N6-AMP-lysine intermediate of the active site. 4 residues coordinate NAD(+): arginine 142, glutamate 179, lysine 295, and lysine 319. Residues cysteine 416, cysteine 419, cysteine 434, and cysteine 440 each contribute to the Zn(2+) site. The 82-residue stretch at 630 to 711 (ESVSSLAGRA…LRELLAGAGA (82 aa)) folds into the BRCT domain.

Belongs to the NAD-dependent DNA ligase family. LigA subfamily. Mg(2+) is required as a cofactor. Mn(2+) serves as cofactor.

The catalysed reaction is NAD(+) + (deoxyribonucleotide)n-3'-hydroxyl + 5'-phospho-(deoxyribonucleotide)m = (deoxyribonucleotide)n+m + AMP + beta-nicotinamide D-nucleotide.. DNA ligase that catalyzes the formation of phosphodiester linkages between 5'-phosphoryl and 3'-hydroxyl groups in double-stranded DNA using NAD as a coenzyme and as the energy source for the reaction. It is essential for DNA replication and repair of damaged DNA. The protein is DNA ligase of Halorhodospira halophila (strain DSM 244 / SL1) (Ectothiorhodospira halophila (strain DSM 244 / SL1)).